We begin with the raw amino-acid sequence, 735 residues long: Phosphoribosylformylglycinamidine synthase subunit PurL (735 aa).

H44 is an active-site residue. Y47 and K86 together coordinate ATP. Position 88 (E88) interacts with Mg(2+). Substrate contacts are provided by residues 89–92 (SHNH) and R111. Catalysis depends on H90, which acts as the Proton acceptor. D112 contacts Mg(2+). Q240 is a substrate binding site. Position 268 (D268) interacts with Mg(2+). 312 to 314 (ESQ) is a substrate binding site. 2 residues coordinate ATP: D496 and G533. N534 contributes to the Mg(2+) binding site. Position 536 (S536) interacts with substrate.

It belongs to the FGAMS family. In terms of assembly, monomer. Part of the FGAM synthase complex composed of 1 PurL, 1 PurQ and 2 PurS subunits.

It is found in the cytoplasm. It catalyses the reaction N(2)-formyl-N(1)-(5-phospho-beta-D-ribosyl)glycinamide + L-glutamine + ATP + H2O = 2-formamido-N(1)-(5-O-phospho-beta-D-ribosyl)acetamidine + L-glutamate + ADP + phosphate + H(+). The protein operates within purine metabolism; IMP biosynthesis via de novo pathway; 5-amino-1-(5-phospho-D-ribosyl)imidazole from N(2)-formyl-N(1)-(5-phospho-D-ribosyl)glycinamide: step 1/2. Functionally, part of the phosphoribosylformylglycinamidine synthase complex involved in the purines biosynthetic pathway. Catalyzes the ATP-dependent conversion of formylglycinamide ribonucleotide (FGAR) and glutamine to yield formylglycinamidine ribonucleotide (FGAM) and glutamate. The FGAM synthase complex is composed of three subunits. PurQ produces an ammonia molecule by converting glutamine to glutamate. PurL transfers the ammonia molecule to FGAR to form FGAM in an ATP-dependent manner. PurS interacts with PurQ and PurL and is thought to assist in the transfer of the ammonia molecule from PurQ to PurL. In Nitratiruptor sp. (strain SB155-2), this protein is Phosphoribosylformylglycinamidine synthase subunit PurL.